The primary structure comprises 240 residues: MSSEELACKLQRRLRLEVRAETDQGDPQPAPCDAPAGHPEPEPPARAPTASADSELNLKLSRRLDIHQGTARPGRSKVFNPYTEFPEFSRRLLKDLEKMFKTYDAGRDGFIDLMELKLMMEKLGAPQTHLGLKSMIKEVDEDFDGKLSFREFLLIFHKAAAGELQEDSGLLALAKFSEIDVALEGVRGAKNFFEAKAQALSCSSKFEAELKAEQEERKREEEARRLRQAAFRELKAAFSA.

The interval 17-54 (EVRAETDQGDPQPAPCDAPAGHPEPEPPARAPTASADS) is disordered. EF-hand domains are found at residues 91–126 (RLLK…LGAP) and 127–162 (QTHL…AAAG). Residues aspartate 104, aspartate 108, glutamate 115, aspartate 140, aspartate 142, aspartate 144, lysine 146, and glutamate 151 each contribute to the Ca(2+) site.

As to expression, widely expressed. Highest expression in testis, followed by ovary, kidney, cerebrum, cerebellum, heart, liver, and spleen. In the cerebrum and cerebellum, undetectable at embryonic stages, expression increases after birth up to adult stage. In adult CNS, detected in neurons of the cerebellum, cerebrum and hippocampus formation, including dentate gyrus and Cornu Ammonis, but not in the white matter. In the testis, expressed in spermatocytes, but not in spermatogonia nor in interstitial cells. In ovary, found predominantly in mural granulosa cells and those of the cumulus oophorus. In kidney, expressed in collecting ducts, but not in glomeruli. Not detected in skeletal muscle.

The protein resides in the mitochondrion inner membrane. Acts as a calcium sensor for mitochondrial flash (mitoflash) activation, an event characterized by stochastic bursts of superoxide production. May play a role in neuronal differentiation. The chain is EF-hand domain-containing protein D1 (Efhd1) from Mus musculus (Mouse).